The chain runs to 79 residues: Quinohemoprotein amine dehydrogenase subunit gamma (79 aa).

The segment at residues 7–16 (CTATTDPGWE) is a cross-link (4-cysteinyl-glutamic acid (Cys-Glu)). 2 cross-links (3-cysteinyl-aspartic acid (Cys-Asp)) span residues 27–33 (CQPMEAD) and 41–49 (CWWPAQVPD). Asp-33 (proton acceptor) is an active-site residue. A cross-link (4'-cysteinyl-tryptophylquinone (Cys-Trp)) is located at residues 37-43 (CSDPCWW). A Tryptophylquinone modification is found at Trp-43.

This sequence belongs to the quinohemoprotein amine dehydrogenase subunit gamma family. As to quaternary structure, heterotrimer of an alpha, a beta and a gamma subunit. Requires cysteine tryptophylquinone residue as cofactor. The cysteine tryptophylquinone (CTQ) is generated by oxidation of the indole ring of a tryptophan residue to form tryptophylquinone, followed by covalent cross-linking with a cysteine residue.

It localises to the periplasm. It catalyses the reaction an aliphatic amine + A + H2O = an aldehyde + AH2 + NH4(+). Functionally, catalyzes the oxidative deamination of a wide range of aliphatic monoamines and diamines. The physiological electron acceptor is an azurin-like blue protein. This chain is Quinohemoprotein amine dehydrogenase subunit gamma (qhnDH), found in Pseudomonas putida (strain ATCC 47054 / DSM 6125 / CFBP 8728 / NCIMB 11950 / KT2440).